Here is a 302-residue protein sequence, read N- to C-terminus: Phosphoribosylaminoimidazole-succinocarboxamide synthase (302 aa).

Belongs to the SAICAR synthetase family.

The enzyme catalyses 5-amino-1-(5-phospho-D-ribosyl)imidazole-4-carboxylate + L-aspartate + ATP = (2S)-2-[5-amino-1-(5-phospho-beta-D-ribosyl)imidazole-4-carboxamido]succinate + ADP + phosphate + 2 H(+). Its pathway is purine metabolism; IMP biosynthesis via de novo pathway; 5-amino-1-(5-phospho-D-ribosyl)imidazole-4-carboxamide from 5-amino-1-(5-phospho-D-ribosyl)imidazole-4-carboxylate: step 1/2. This is Phosphoribosylaminoimidazole-succinocarboxamide synthase from Cupriavidus metallidurans (strain ATCC 43123 / DSM 2839 / NBRC 102507 / CH34) (Ralstonia metallidurans).